We begin with the raw amino-acid sequence, 232 residues long: Phosphate import ATP-binding protein PstB (232 aa).

In terms of domain architecture, ABC transporter spans 1-227 (MFNINMEIKE…PKDRRTENYI (227 aa)). 18 to 25 (GPSGCGKT) provides a ligand contact to ATP.

The protein belongs to the ABC transporter superfamily. Phosphate importer (TC 3.A.1.7) family. In terms of assembly, the complex is composed of two ATP-binding proteins (PstB), two transmembrane proteins (PstC and PstA) and a solute-binding protein (PstS).

The protein resides in the cell membrane. It carries out the reaction phosphate(out) + ATP + H2O = ADP + 2 phosphate(in) + H(+). Functionally, part of the ABC transporter complex PstSACB involved in phosphate import. Responsible for energy coupling to the transport system. This is Phosphate import ATP-binding protein PstB from Mycoplasma mycoides subsp. mycoides SC (strain CCUG 32753 / NCTC 10114 / PG1).